A 316-amino-acid chain; its full sequence is Chitin synthase export chaperone (316 aa).

Transmembrane regions (helical) follow at residues 62 to 82, 99 to 119, 130 to 150, 170 to 190, 200 to 220, 233 to 253, and 266 to 286; these read VIFD…ILII, LYFF…DCGV, FVAI…IIGF, TSML…KAWI, ASGM…VFVI, LWVT…QVLV, and HYLD…MMVY.

Belongs to the CHS7 family. In terms of assembly, interacts with CHS3.

It is found in the endoplasmic reticulum membrane. Functionally, chaperone required for the export of the chitin synthase CHS3 from the endoplasmic reticulum. The sequence is that of Chitin synthase export chaperone (CHS7) from Saccharomyces cerevisiae (strain ATCC 204508 / S288c) (Baker's yeast).